Here is a 360-residue protein sequence, read N- to C-terminus: Photosystem II protein D1 (360 aa).

3 helical membrane-spanning segments follow: residues 29-46 (YIGW…TATT), 118-133 (HFLL…EWEF), and 142-156 (WISV…AASA). Residue H118 coordinates chlorophyll a. W126 is a pheophytin a binding site. Residues D170 and E189 each coordinate [CaMn4O5] cluster. Residues 197–218 (FHQLGVAGVFGGSLFSAMHGSL) form a helical membrane-spanning segment. H198 is a chlorophyll a binding site. Residues H215 and 264 to 265 (SF) each bind a quinone. H215 is a Fe cation binding site. H272 provides a ligand contact to Fe cation. A helical membrane pass occupies residues 274-288 (FLGLWPVVGIWFTAL). [CaMn4O5] cluster-binding residues include H332, E333, D342, and A344. The propeptide occupies 345–360 (AGESLPVALTAPAVNG).

This sequence belongs to the reaction center PufL/M/PsbA/D family. PSII is composed of 1 copy each of membrane proteins PsbA, PsbB, PsbC, PsbD, PsbE, PsbF, PsbH, PsbI, PsbJ, PsbK, PsbL, PsbM, PsbT, PsbX, PsbY, PsbZ, Psb30/Ycf12, at least 3 peripheral proteins of the oxygen-evolving complex and a large number of cofactors. It forms dimeric complexes. The D1/D2 heterodimer binds P680, chlorophylls that are the primary electron donor of PSII, and subsequent electron acceptors. It shares a non-heme iron and each subunit binds pheophytin, quinone, additional chlorophylls, carotenoids and lipids. D1 provides most of the ligands for the Mn4-Ca-O5 cluster of the oxygen-evolving complex (OEC). There is also a Cl(-1) ion associated with D1 and D2, which is required for oxygen evolution. The PSII complex binds additional chlorophylls, carotenoids and specific lipids. is required as a cofactor. Post-translationally, tyr-161 forms a radical intermediate that is referred to as redox-active TyrZ, YZ or Y-Z. C-terminally processed by CTPA; processing is essential to allow assembly of the oxygen-evolving complex and thus photosynthetic growth.

The protein localises to the plastid. The protein resides in the chloroplast thylakoid membrane. The enzyme catalyses 2 a plastoquinone + 4 hnu + 2 H2O = 2 a plastoquinol + O2. Its function is as follows. Photosystem II (PSII) is a light-driven water:plastoquinone oxidoreductase that uses light energy to abstract electrons from H(2)O, generating O(2) and a proton gradient subsequently used for ATP formation. It consists of a core antenna complex that captures photons, and an electron transfer chain that converts photonic excitation into a charge separation. The D1/D2 (PsbA/PsbD) reaction center heterodimer binds P680, the primary electron donor of PSII as well as several subsequent electron acceptors. The sequence is that of Photosystem II protein D1 from Rhodomonas salina (Cryptomonas salina).